We begin with the raw amino-acid sequence, 692 residues long: Glycine--tRNA ligase beta subunit (692 aa).

It belongs to the class-II aminoacyl-tRNA synthetase family. In terms of assembly, tetramer of two alpha and two beta subunits.

The protein resides in the cytoplasm. The catalysed reaction is tRNA(Gly) + glycine + ATP = glycyl-tRNA(Gly) + AMP + diphosphate. The polypeptide is Glycine--tRNA ligase beta subunit (Alteromonas mediterranea (strain DSM 17117 / CIP 110805 / LMG 28347 / Deep ecotype)).